Consider the following 90-residue polypeptide: Probable Fe(2+)-trafficking protein (90 aa).

This sequence belongs to the Fe(2+)-trafficking protein family. In terms of assembly, monomer.

Its function is as follows. Could be a mediator in iron transactions between iron acquisition and iron-requiring processes, such as synthesis and/or repair of Fe-S clusters in biosynthetic enzymes. This chain is Probable Fe(2+)-trafficking protein, found in Pectobacterium carotovorum subsp. carotovorum (strain PC1).